Reading from the N-terminus, the 529-residue chain is Peptide chain release factor 3 (529 aa).

The tr-type G domain maps to 11-280 (AKRRTFAIIS…GLIEWAPQPM (270 aa)). Residues 20-27 (SHPDAGKT), 88-92 (DTPGH), and 142-145 (NKLD) contribute to the GTP site.

The protein belongs to the TRAFAC class translation factor GTPase superfamily. Classic translation factor GTPase family. PrfC subfamily.

The protein resides in the cytoplasm. In terms of biological role, increases the formation of ribosomal termination complexes and stimulates activities of RF-1 and RF-2. It binds guanine nucleotides and has strong preference for UGA stop codons. It may interact directly with the ribosome. The stimulation of RF-1 and RF-2 is significantly reduced by GTP and GDP, but not by GMP. This Enterobacter sp. (strain 638) protein is Peptide chain release factor 3.